The sequence spans 288 residues: 2-hydroxy-6-oxononadienedioate/2-hydroxy-6-oxononatrienedioate hydrolase (288 aa).

The AB hydrolase-1 domain maps to 39 to 274 (LVLLHGSGPG…RCGHWAQWEH (236 aa)). Catalysis depends on His268, which acts as the Proton acceptor.

The protein belongs to the AB hydrolase superfamily. MhpC family. As to quaternary structure, homodimer.

It carries out the reaction (2Z,4E)-2-hydroxy-6-oxonona-2,4-dienedioate + H2O = (2Z)-2-hydroxypenta-2,4-dienoate + succinate + H(+). The enzyme catalyses (2Z,4E,7E)-2-hydroxy-6-oxonona-2,4,7-trienedioate + H2O = (2Z)-2-hydroxypenta-2,4-dienoate + fumarate + H(+). It participates in aromatic compound metabolism; 3-phenylpropanoate degradation. Its function is as follows. Catalyzes the cleavage of the C5-C6 bond of 2-hydroxy-6-oxononadienedioate and 2-hydroxy-6-oxononatrienedioate, a dienol ring fission product of the bacterial meta-cleavage pathway for degradation of phenylpropionic acid. In Paraburkholderia phymatum (strain DSM 17167 / CIP 108236 / LMG 21445 / STM815) (Burkholderia phymatum), this protein is 2-hydroxy-6-oxononadienedioate/2-hydroxy-6-oxononatrienedioate hydrolase.